A 5054-amino-acid polypeptide reads, in one-letter code: Malformin synthetase mlfA (5054 aa).

Residues 194-585 (ERRAANRPHS…CGRADTQVKL (392 aa)) are adenylation 1. The 77-residue stretch at 723–799 (LGLSQLEQEI…EASSLAEVQE (77 aa)) folds into the Carrier 1 domain. At serine 760 the chain carries O-(pantetheine 4'-phosphoryl)serine. The condensation 1 stretch occupies residues 837 to 1268 (EDVFPCTTMQ…ALNTLTLLQA (432 aa)). Positions 1296 to 1685 (DRWVTRQPES…GRKDTQVKLR (390 aa)) are adenylation 2. Residues 1823 to 1900 (TASSKLELTL…QLAAILGEAT (78 aa)) enclose the Carrier 2 domain. Serine 1860 carries the post-translational modification O-(pantetheine 4'-phosphoryl)serine. Disordered regions lie at residues 1899–1929 (ATGQPESSASSTTEEGFTFSTPDDSSTNDGV) and 1964–1994 (GSSSCKTPSVSSSSSSSSSRKKKSAKVVSPV). Low complexity-rich tracts occupy residues 1904–1927 (ESSASSTTEEGFTFSTPDDSSTND) and 1965–1981 (SSSCKTPSVSSSSSSSS). A condensation 2 region spans residues 2033 to 2448 (EDIYPATALQ…GVSYRDKQTL (416 aa)). Residues 2471-2863 (VRTPHAPAVF…IGRRDGQLKL (393 aa)) are adenylation 3. Residues 2999-3075 (RPATAQEREM…QLMRHLSANG (77 aa)) enclose the Carrier 3 domain. Serine 3036 is modified (O-(pantetheine 4'-phosphoryl)serine). 2 condensation regions span residues 3092–3557 (WVPL…TYDQ) and 3578–3997 (DIYP…EQLV). Residues 4022 to 4412 (HSSREAACAW…VGRKDNQIKF (391 aa)) are adenylation 4. The 77-residue stretch at 4546–4622 (MPFTAAECKM…DLAYRTANLV (77 aa)) folds into the Carrier 4 domain. Serine 4583 is subject to O-(pantetheine 4'-phosphoryl)serine. The interval 4659-4972 (EVLPTTSFQR…LQTIVQHQNN (314 aa)) is condensation 5.

It belongs to the NRP synthetase family.

Its pathway is secondary metabolite biosynthesis. In terms of biological role, nonribosomal peptide synthetase; part of the gene cluster that mediates the biosynthesis of malformins, cyclic pentapeptides with a disulfide bond between 2 consecutive cysteins, that show potential anti-tumor as well as antimalarial and antitrypanosomal properties. The nonribosomal peptide synthetase mlfA is responsible of the formation of the cyclic pentapeptide. The malformin biosynthesis clusters in malformin-producing fungi also contain enzymes involved in the formation of the disulfide bond between the two consecutive cysteins within malformins, in addition to additional tailoring enzymes such as methyltransferases or oxidoreductases. They are also composed of up to 4 major facilitator superfamily transporters, and transcription factors probably involved in the regulation of the expression of those clusters. This chain is Malformin synthetase mlfA, found in Aspergillus niger (strain ATCC MYA-4892 / CBS 513.88 / FGSC A1513).